The chain runs to 424 residues: Keratin, type I cytoskeletal 20 (424 aa).

The head stretch occupies residues 1-69 (MDFSRRSFHR…TGGGDLFVGN (69 aa)). A Phosphoserine; by MAPKAPK2, MAPKAPK3 and PKC modification is found at Ser-13. The segment at 70–105 (EKMAMQNLNDRLASYLEKVRTLEQSNSKLEVQIKQW) is coil 1A. The IF rod domain occupies 70–381 (EKMAMQNLND…RLLEGEDVKT (312 aa)). Residues 106–123 (YETNAPRAGRDYSAYYRQ) are linker 1. Residues 124–215 (IEELRSQIKD…KEHQEEVDGL (92 aa)) form a coil 1B region. The tract at residues 216-238 (HKHLGNTVNVEVDAAPGLNLGVI) is linker 12. Residues 239–377 (MNEMRQKYEV…ATYRRLLEGE (139 aa)) form a coil 2 region. A tail region spans residues 378-424 (DVKTTEYQLSTLEERDIKKTRKIKTVVQEVVDGKVVSSEVKEVEENI).

The protein belongs to the intermediate filament family. As to quaternary structure, heterotetramer of two type I and two type II keratins. Associates with KRT8. Post-translationally, hyperphosphorylation at Ser-13 occurs during the early stages of apoptosis but becomes less prominent during the later stages. Phosphorylation at Ser-13 also increases in response to stress brought on by cell injury. In terms of processing, proteolytically cleaved by caspases during apoptosis. Cleavage occurs at Asp-228. In terms of tissue distribution, expressed predominantly in the intestinal epithelium. Expressed in luminal cells of colonic mucosa. Also expressed in the Merkel cells of keratinized oral mucosa; specifically at the tips of some rete ridges of the gingival mucosa, in the basal layer of the palatal mucosa and in the taste buds of lingual mucosa.

It is found in the cytoplasm. In terms of biological role, plays a significant role in maintaining keratin filament organization in intestinal epithelia. When phosphorylated, plays a role in the secretion of mucin in the small intestine. The protein is Keratin, type I cytoskeletal 20 (KRT20) of Homo sapiens (Human).